Reading from the N-terminus, the 304-residue chain is MSSVKPLVYAVIRFLREQSQMDAYTSDEQESLEVAIQCLETVFKISPEDTHLAVSQPLTEMFTNSVCKNDIRPLSNSVPEDVGKADQLKDEGNNHMKEENYAAAVDCYTQAIELDPNNAVYYCNRAAAQSKLSHYTDAIKDCEKAIAIDSKYSKAYGRMGLALTAMNKFEEAVTSYQKALDLDPENDSYKSNLKIAEQKLREVSSPTGTGLSFDMASLINNPAFITMAASLMQNPQVQQLMSGMMTNAIGGPAAGVGGLTDLSSLIQAGQQFAQQIQQQNPELIEQLRNHIRSRSFSSSADEHS.

TPR repeat units follow at residues 15 to 49 (LREQ…SPED), 85 to 118 (ADQL…DPNN), 120 to 152 (VYYC…DSKY), and 153 to 186 (SKAY…DPEN). K131 carries the post-translational modification N6-acetyllysine. Phosphoserine occurs at positions 293, 295, and 297.

The protein belongs to the SGT family. In terms of assembly, homooligomerize.

Functionally, co-chaperone that binds directly to HSC70 and HSP70 and regulates their ATPase activity. In Mus musculus (Mouse), this protein is Small glutamine-rich tetratricopeptide repeat-containing protein beta (Sgtb).